The chain runs to 144 residues: Small ribosomal subunit protein eS12z (144 aa).

N-acetylserine is present on serine 2.

Belongs to the eukaryotic ribosomal protein eS12 family.

This is Small ribosomal subunit protein eS12z (RPS12A) from Arabidopsis thaliana (Mouse-ear cress).